The primary structure comprises 400 residues: Acetate kinase (400 aa).

Position 10 (asparagine 10) interacts with Mg(2+). Lysine 17 lines the ATP pocket. Arginine 91 lines the substrate pocket. Aspartate 150 (proton donor/acceptor) is an active-site residue. ATP-binding positions include 210-214, 285-287, and 333-337; these read HLGGG, DFR, and GIGEN. Mg(2+) is bound at residue glutamate 387.

The protein belongs to the acetokinase family. In terms of assembly, homodimer. Mg(2+) is required as a cofactor. The cofactor is Mn(2+).

It is found in the cytoplasm. The catalysed reaction is acetate + ATP = acetyl phosphate + ADP. It participates in metabolic intermediate biosynthesis; acetyl-CoA biosynthesis; acetyl-CoA from acetate: step 1/2. Functionally, catalyzes the formation of acetyl phosphate from acetate and ATP. Can also catalyze the reverse reaction. In Buchnera aphidicola subsp. Baizongia pistaciae (strain Bp), this protein is Acetate kinase.